The sequence spans 334 residues: Holliday junction branch migration complex subunit RuvB (334 aa).

The large ATPase domain (RuvB-L) stretch occupies residues 4–184 (ADRLIQPQLQ…FGIPLRLEFY (181 aa)). ATP is bound by residues arginine 24, glycine 65, lysine 68, threonine 69, threonine 70, 131–133 (EDY), arginine 174, tyrosine 184, and arginine 221. A Mg(2+)-binding site is contributed by threonine 69. The small ATPAse domain (RuvB-S) stretch occupies residues 185–255 (NIKDLSTIVT…VADHALDLLD (71 aa)). The tract at residues 258–334 (NEGFDYMDRK…YQHFQLIKPE (77 aa)) is head domain (RuvB-H). Arginine 294, arginine 313, and arginine 318 together coordinate DNA.

Belongs to the RuvB family. As to quaternary structure, homohexamer. Forms an RuvA(8)-RuvB(12)-Holliday junction (HJ) complex. HJ DNA is sandwiched between 2 RuvA tetramers; dsDNA enters through RuvA and exits via RuvB. An RuvB hexamer assembles on each DNA strand where it exits the tetramer. Each RuvB hexamer is contacted by two RuvA subunits (via domain III) on 2 adjacent RuvB subunits; this complex drives branch migration. In the full resolvosome a probable DNA-RuvA(4)-RuvB(12)-RuvC(2) complex forms which resolves the HJ.

The protein localises to the cytoplasm. It carries out the reaction ATP + H2O = ADP + phosphate + H(+). In terms of biological role, the RuvA-RuvB-RuvC complex processes Holliday junction (HJ) DNA during genetic recombination and DNA repair, while the RuvA-RuvB complex plays an important role in the rescue of blocked DNA replication forks via replication fork reversal (RFR). RuvA specifically binds to HJ cruciform DNA, conferring on it an open structure. The RuvB hexamer acts as an ATP-dependent pump, pulling dsDNA into and through the RuvAB complex. RuvB forms 2 homohexamers on either side of HJ DNA bound by 1 or 2 RuvA tetramers; 4 subunits per hexamer contact DNA at a time. Coordinated motions by a converter formed by DNA-disengaged RuvB subunits stimulates ATP hydrolysis and nucleotide exchange. Immobilization of the converter enables RuvB to convert the ATP-contained energy into a lever motion, pulling 2 nucleotides of DNA out of the RuvA tetramer per ATP hydrolyzed, thus driving DNA branch migration. The RuvB motors rotate together with the DNA substrate, which together with the progressing nucleotide cycle form the mechanistic basis for DNA recombination by continuous HJ branch migration. Branch migration allows RuvC to scan DNA until it finds its consensus sequence, where it cleaves and resolves cruciform DNA. This is Holliday junction branch migration complex subunit RuvB from Shewanella sp. (strain W3-18-1).